A 317-amino-acid chain; its full sequence is Acetyl-coenzyme A carboxylase carboxyl transferase subunit beta (317 aa).

The segment at 1–28 (MANNMTDTMTKPDINNDSTSLQQNGNKA) is disordered. Residues 55–317 (PSTKCSSCHS…LCSVPNVDVQ (263 aa)) enclose the CoA carboxyltransferase N-terminal domain. C59, C62, C78, and C81 together coordinate Zn(2+). The C4-type zinc-finger motif lies at 59–81 (CSSCHSIITNTALIFNCYVCPHC).

This sequence belongs to the AccD/PCCB family. In terms of assembly, acetyl-CoA carboxylase is a heterohexamer composed of biotin carboxyl carrier protein (AccB), biotin carboxylase (AccC) and two subunits each of ACCase subunit alpha (AccA) and ACCase subunit beta (AccD). Zn(2+) is required as a cofactor.

It localises to the cytoplasm. The enzyme catalyses N(6)-carboxybiotinyl-L-lysyl-[protein] + acetyl-CoA = N(6)-biotinyl-L-lysyl-[protein] + malonyl-CoA. It participates in lipid metabolism; malonyl-CoA biosynthesis; malonyl-CoA from acetyl-CoA: step 1/1. In terms of biological role, component of the acetyl coenzyme A carboxylase (ACC) complex. Biotin carboxylase (BC) catalyzes the carboxylation of biotin on its carrier protein (BCCP) and then the CO(2) group is transferred by the transcarboxylase to acetyl-CoA to form malonyl-CoA. The polypeptide is Acetyl-coenzyme A carboxylase carboxyl transferase subunit beta (Psychrobacter cryohalolentis (strain ATCC BAA-1226 / DSM 17306 / VKM B-2378 / K5)).